Reading from the N-terminus, the 523-residue chain is Bifunctional purine biosynthesis protein PurH (523 aa).

In terms of domain architecture, MGS-like spans 4–152 (DHIRRPIRRA…KNHPSVAVVT (149 aa)).

Belongs to the PurH family.

It carries out the reaction (6R)-10-formyltetrahydrofolate + 5-amino-1-(5-phospho-beta-D-ribosyl)imidazole-4-carboxamide = 5-formamido-1-(5-phospho-D-ribosyl)imidazole-4-carboxamide + (6S)-5,6,7,8-tetrahydrofolate. It catalyses the reaction IMP + H2O = 5-formamido-1-(5-phospho-D-ribosyl)imidazole-4-carboxamide. Its pathway is purine metabolism; IMP biosynthesis via de novo pathway; 5-formamido-1-(5-phospho-D-ribosyl)imidazole-4-carboxamide from 5-amino-1-(5-phospho-D-ribosyl)imidazole-4-carboxamide (10-formyl THF route): step 1/1. The protein operates within purine metabolism; IMP biosynthesis via de novo pathway; IMP from 5-formamido-1-(5-phospho-D-ribosyl)imidazole-4-carboxamide: step 1/1. In Mycobacterium marinum (strain ATCC BAA-535 / M), this protein is Bifunctional purine biosynthesis protein PurH.